An 884-amino-acid chain; its full sequence is Formin-like protein 9 (884 aa).

Positions 1–19 (MGMAMRCVLVLFSVSPVLL) are cleaved as a signal peptide. The chain crosses the membrane as a helical span at residues 140-160 (IVALGVVGLCLVVLGVVIAAF). Disordered stretches follow at residues 179 to 204 (FHHG…PDPL), 295 to 318 (THDS…LSPK), and 403 to 473 (TMTN…PLPR). Over residues 300 to 310 (SDSSYQSLSPD) the composition is skewed to low complexity. Residues 429-443 (KPAPPPPPQKNPPPN) are compositionally biased toward pro residues. The FH2 domain occupies 464-884 (VGKDGSPLPR…QTLNLVLPLK (421 aa)).

The protein belongs to the formin-like family. Class-I subfamily.

Its subcellular location is the membrane. The protein is Formin-like protein 9 (FH9) of Oryza sativa subsp. indica (Rice).